We begin with the raw amino-acid sequence, 169 residues long: Large ribosomal subunit protein uL23 (169 aa).

The segment at 1-20 (MAGKKVKSNTPKQDLSVSKS) is disordered. Positions 8-20 (SNTPKQDLSVSKS) are enriched in polar residues.

The protein belongs to the universal ribosomal protein uL23 family.

This protein binds to a specific region on the 26S rRNA. This Dictyostelium discoideum (Social amoeba) protein is Large ribosomal subunit protein uL23 (rpl23a).